The following is a 1460-amino-acid chain: Centrosomal protein of 164 kDa (1460 aa).

Positions 1–194 (MAGRPLRIGD…PSQGLKTSAY (194 aa)) are interaction with ATRIP. Positions 56 to 89 (APLPGEWKPCQDITGDIYYFNFANGQSMWDHPCD) constitute a WW domain. The segment at 107–135 (GAIKKKKKKKEKKDKKDRDPPKSSLALGS) is disordered. Over residues 109-119 (IKKKKKKKEKK) the composition is skewed to basic residues. Serine 186 is subject to Phosphoserine; by ATR and ATM. Phosphoserine is present on serine 201. Disordered stretches follow at residues 213 to 412 (GLGE…HGLD), 440 to 593 (AQQP…AALK), and 658 to 719 (EEAR…QKNR). A compositionally biased stretch (acidic residues) spans 217–227 (ETNEEDEEESD). Positions 256 to 270 (ESLRTSQPEEKKDVS) are enriched in basic and acidic residues. Over residues 285-296 (SSPGADSSLSSA) the composition is skewed to low complexity. Composition is skewed to basic and acidic residues over residues 310–323 (LPEK…EPKI) and 357–367 (EGSRREEAAKE). Over residues 453–464 (QSSQDELQSKQS) the composition is skewed to low complexity. Positions 465 to 481 (KGLEERLSPPLPHEERA) are enriched in basic and acidic residues. The span at 514 to 525 (SAASLSLQLSLQ) shows a compositional bias: low complexity. The span at 537–546 (EKGKEQHSQA) shows a compositional bias: basic and acidic residues. Phosphoserine is present on serine 566. Composition is skewed to basic and acidic residues over residues 658 to 668 (EEARMREEESQ) and 686 to 719 (DQIR…QKNR). The stretch at 1154–1206 (GIKALEDMRKNLEKETRHLDEMKSAMRKGHNLLKKKEEKLNQLESSLWEEASD) forms a coiled coil. Positions 1290 to 1310 (PPPLLASMPAQLPPRDPKSTP) are disordered. 3 positions are modified to phosphoserine: serine 1386, serine 1388, and serine 1443.

Interacts (via N-terminus) with ATRIP. Interacts with ATM, ATR and MDC1. Interacts with XPA (via N-terminus) upon UV irradiation. Interacts with CEP83, CCDC92, TTBK2, DVL3, NPHP3 and weakly with NPHP4. Interacts with DZIP1. In terms of processing, phosphorylation at Ser-186 is induced upon DNA-damage caused by treatment with IR irradiation, UV irradiation, hydroxyurea or amphidicolin. Also MDC1-mediated chromatin remodeling is critical for DNA damage-induced phosphorylation. In terms of tissue distribution, expressed in several cell lines.

It localises to the cytoplasm. The protein resides in the cytoskeleton. The protein localises to the microtubule organizing center. Its subcellular location is the centrosome. It is found in the centriole. It localises to the nucleus. In terms of biological role, plays a role in microtubule organization and/or maintenance for the formation of primary cilia (PC), a microtubule-based structure that protrudes from the surface of epithelial cells. Plays a critical role in G2/M checkpoint and nuclear divisions. A key player in the DNA damage-activated ATR/ATM signaling cascade since it is required for the proper phosphorylation of H2AX, RPA, CHEK2 and CHEK1. Plays a critical role in chromosome segregation, acting as a mediator required for the maintenance of genomic stability through modulation of MDC1, RPA and CHEK1. The sequence is that of Centrosomal protein of 164 kDa (CEP164) from Homo sapiens (Human).